A 61-amino-acid polypeptide reads, in one-letter code: Large ribosomal subunit protein bL28 (61 aa).

It belongs to the bacterial ribosomal protein bL28 family.

The chain is Large ribosomal subunit protein bL28 from Geobacillus thermodenitrificans (strain NG80-2).